We begin with the raw amino-acid sequence, 743 residues long: MLPGYTAESKDGAHGYERLHDIILQDSDADGEDDVILFPHAEELANAAVGIDGDDGNGRVVRLGTTQHLDESDSSEDEATLNRVGDIPLEWYKDEKHIGYDIEGKKLMKAERSALERLLEATDDPNAMRTIYDALHDEKKTLSNADLQLIFNLQRNRTTNSNYDMYSGVQEDTVVFDPLNHPLARSSGPSKKAFVPALHDTKVIAKMVRRLRKEEAESKLRPATEEKEDEDQLLWDDGHVEMDTHTHFKYFNRVPKPKVPPPGTFESYRPPPEYLPSERAKQRQARLRTIDRREHFLPQSFDALRHVPFYHHTIQDRYQRCLDLAFFPRAQRTRLVVDPDKLLPELPNPKDLRPYPEKLSFHYKGHTATVRSVSVSPNGQYLATGCDDHLVRVYEVQTGRLMKRYDMGAPVQQVEFCPSKSLNILAAAVEYSLVFVVPTFAAHALVNDHTIRFLRAPGLSAGQREAAHALGAVDTLGGRAVTQTTLDADETAHEATTDLHDVEEREKRAEFLDASAKERNAGIVVKIAMHAKVKKFCFHIKGDYLCALCPKDHVKYRQTIMLQLSKRKVFCPFRKFSEVVTDCRFHPREPLFFLATTNSVRCYNLMAHRLQRRFKASGGVTTCLSIHPEGDNFLVGDTTSHTSWFDMDFSDKPYKRMRSHKGVVNALAFHPKTGAYPLFATGASDGQVHVFHGMVYDDYNKNALVVPVKILKHQRSVYAVAWHPSLAWLFTSTEDGVVTAWTE.

WD repeat units follow at residues Gly365–Arg404, Lys575–Lys615, Ser617–Lys655, Ser659–Lys701, and Lys712–Glu743.

This sequence belongs to the WD repeat BOP1/ERB1 family.

It localises to the nucleus. The protein localises to the nucleolus. The protein resides in the nucleoplasm. Its function is as follows. Required for maturation of ribosomal RNAs and formation of the large ribosomal subunit. This is Ribosome biogenesis protein BOP1 homolog from Leishmania braziliensis.